A 745-amino-acid polypeptide reads, in one-letter code: Phosphoribosylformylglycinamidine synthase subunit PurL (745 aa).

Residue His-47 is part of the active site. 2 residues coordinate ATP: Tyr-50 and Lys-90. Glu-92 serves as a coordination point for Mg(2+). Residues 93-96 (SHNH) and Arg-115 each bind substrate. Catalysis depends on His-94, which acts as the Proton acceptor. Mg(2+) is bound at residue Asp-116. Gln-240 provides a ligand contact to substrate. Asp-268 lines the Mg(2+) pocket. 312–314 (ESQ) lines the substrate pocket. ATP is bound by residues Asn-501 and Gly-538. A Mg(2+)-binding site is contributed by Asn-539. Ser-541 contacts substrate.

The protein belongs to the FGAMS family. Monomer. Part of the FGAM synthase complex composed of 1 PurL, 1 PurQ and 2 PurS subunits.

Its subcellular location is the cytoplasm. The enzyme catalyses N(2)-formyl-N(1)-(5-phospho-beta-D-ribosyl)glycinamide + L-glutamine + ATP + H2O = 2-formamido-N(1)-(5-O-phospho-beta-D-ribosyl)acetamidine + L-glutamate + ADP + phosphate + H(+). The protein operates within purine metabolism; IMP biosynthesis via de novo pathway; 5-amino-1-(5-phospho-D-ribosyl)imidazole from N(2)-formyl-N(1)-(5-phospho-D-ribosyl)glycinamide: step 1/2. In terms of biological role, part of the phosphoribosylformylglycinamidine synthase complex involved in the purines biosynthetic pathway. Catalyzes the ATP-dependent conversion of formylglycinamide ribonucleotide (FGAR) and glutamine to yield formylglycinamidine ribonucleotide (FGAM) and glutamate. The FGAM synthase complex is composed of three subunits. PurQ produces an ammonia molecule by converting glutamine to glutamate. PurL transfers the ammonia molecule to FGAR to form FGAM in an ATP-dependent manner. PurS interacts with PurQ and PurL and is thought to assist in the transfer of the ammonia molecule from PurQ to PurL. The chain is Phosphoribosylformylglycinamidine synthase subunit PurL from Leptospira borgpetersenii serovar Hardjo-bovis (strain JB197).